The primary structure comprises 453 residues: UDP-N-acetylmuramoylalanine--D-glutamate ligase (453 aa).

An ATP-binding site is contributed by 117 to 123 (GTNGKTT).

It belongs to the MurCDEF family.

Its subcellular location is the cytoplasm. It carries out the reaction UDP-N-acetyl-alpha-D-muramoyl-L-alanine + D-glutamate + ATP = UDP-N-acetyl-alpha-D-muramoyl-L-alanyl-D-glutamate + ADP + phosphate + H(+). The protein operates within cell wall biogenesis; peptidoglycan biosynthesis. Its function is as follows. Cell wall formation. Catalyzes the addition of glutamate to the nucleotide precursor UDP-N-acetylmuramoyl-L-alanine (UMA). In Caldicellulosiruptor saccharolyticus (strain ATCC 43494 / DSM 8903 / Tp8T 6331), this protein is UDP-N-acetylmuramoylalanine--D-glutamate ligase.